The sequence spans 570 residues: Sulfite reductase [NADPH] hemoprotein beta-component (570 aa).

4 residues coordinate [4Fe-4S] cluster: cysteine 434, cysteine 440, cysteine 479, and cysteine 483. Cysteine 483 contacts siroheme.

This sequence belongs to the nitrite and sulfite reductase 4Fe-4S domain family. Alpha(8)-beta(8). The alpha component is a flavoprotein, the beta component is a hemoprotein. Siroheme is required as a cofactor. [4Fe-4S] cluster serves as cofactor.

The enzyme catalyses hydrogen sulfide + 3 NADP(+) + 3 H2O = sulfite + 3 NADPH + 4 H(+). Its pathway is sulfur metabolism; hydrogen sulfide biosynthesis; hydrogen sulfide from sulfite (NADPH route): step 1/1. In terms of biological role, component of the sulfite reductase complex that catalyzes the 6-electron reduction of sulfite to sulfide. This is one of several activities required for the biosynthesis of L-cysteine from sulfate. The polypeptide is Sulfite reductase [NADPH] hemoprotein beta-component (Escherichia coli (strain ATCC 8739 / DSM 1576 / NBRC 3972 / NCIMB 8545 / WDCM 00012 / Crooks)).